Here is a 21-residue protein sequence, read N- to C-terminus: Glucose-1-phosphate adenylyltransferase large subunit (21 aa).

The segment at 1-21 (SVTADNASETKVREIGQEKSS) is disordered. Over residues 8–21 (SETKVREIGQEKSS) the composition is skewed to basic and acidic residues.

The protein belongs to the bacterial/plant glucose-1-phosphate adenylyltransferase family. Heterotetramer.

Its subcellular location is the plastid. The protein resides in the chloroplast. It is found in the amyloplast. The enzyme catalyses alpha-D-glucose 1-phosphate + ATP + H(+) = ADP-alpha-D-glucose + diphosphate. It functions in the pathway glycan biosynthesis; starch biosynthesis. With respect to regulation, activated by 3'phosphoglycerate, inhibited by orthophosphate. Allosteric regulation. Its function is as follows. This protein plays a role in synthesis of starch. It catalyzes the synthesis of the activated glycosyl donor, ADP-glucose from Glc-1-P and ATP. The polypeptide is Glucose-1-phosphate adenylyltransferase large subunit (Spinacia oleracea (Spinach)).